We begin with the raw amino-acid sequence, 216 residues long: Probable methylthioribulose-1-phosphate dehydratase (216 aa).

Cys-87 serves as a coordination point for substrate. Residues His-105 and His-107 each coordinate Zn(2+). The active-site Proton donor/acceptor is the Glu-129.

The protein belongs to the aldolase class II family. MtnB subfamily. The cofactor is Zn(2+).

It localises to the cytoplasm. It carries out the reaction 5-(methylsulfanyl)-D-ribulose 1-phosphate = 5-methylsulfanyl-2,3-dioxopentyl phosphate + H2O. Its pathway is amino-acid biosynthesis; L-methionine biosynthesis via salvage pathway; L-methionine from S-methyl-5-thio-alpha-D-ribose 1-phosphate: step 2/6. Its function is as follows. Catalyzes the dehydration of methylthioribulose-1-phosphate (MTRu-1-P) into 2,3-diketo-5-methylthiopentyl-1-phosphate (DK-MTP-1-P). This is Probable methylthioribulose-1-phosphate dehydratase from Drosophila persimilis (Fruit fly).